We begin with the raw amino-acid sequence, 638 residues long: Guanylate-binding protein 7 (638 aa).

The tract at residues 1–310 (MASEIHMPGP…DAINSGATPC (310 aa)) is GTPase domain (Globular). A GB1/RHD3-type G domain is found at 35-277 (TQPVVVVAIV…FCSYIFTHAK (243 aa)). GTP is bound by residues 45–52 (GLYRTGKS), 67–69 (LGC), and 97–101 (DTEGL). The interaction with the CYBA-CYBB complex stretch occupies residues 311–638 (LENAMAVLAQ…LRNPGKKIIS (328 aa)). Residues 590 to 638 (PSVFSQILDVAGSIFIAALPGAAKLVDLGMKILSSLCNRLRNPGKKIIS) form a C-terminal tail; required for its localization to cytoplasmic vesicle region.

Belongs to the TRAFAC class dynamin-like GTPase superfamily. GB1/RHD3 GTPase family. GB1 subfamily. As to quaternary structure, monomer and dimer. Interacts with CYBA, CYBA-CYBB complex and ATG4B. Interacts (via GB1/RHD3-type G domain) with NCF2 and NCF2-NCF4 complex.

Its subcellular location is the cytoplasmic vesicle membrane. The enzyme catalyses GTP + H2O = GDP + phosphate + H(+). It catalyses the reaction GDP + H2O = GMP + phosphate + H(+). Interferon (IFN)-inducible GTPase that plays important roles in innate immunity against a diverse range of bacterial, viral and protozoan pathogens. Hydrolyzes GTP to GMP in two consecutive cleavage reactions and predominantly uses GTP and not GDP or GMP as the substrate. Following infection, recruited to the pathogen-containing vacuoles or vacuole-escaped bacteria and acts as a positive regulator of inflammasome assembly by promoting the release of inflammasome ligands from bacteria. Acts by promoting lysis of pathogen-containing vacuoles, releasing pathogens into the cytosol. Following pathogen release in the cytosol, promotes recruitment of proteins that mediate bacterial cytolysis: this liberates ligands that are detected by inflammasomes, such as lipopolysaccharide (LPS) that activates the non-canonical CASP4/CASP11 inflammasome or double-stranded DNA (dsDNA) that activates the AIM2 inflammasome. Also promotes IFN-gamma-mediated host defense against bacterial infections by regulating oxidative responses and bacteriolytic peptide generation. May help to assemble NADPH oxidase on phagosomal membranes by acting as a bridging protein between NADPH oxidase cytosolic subunits NCF2-NCF4 and the membrane subunits CYBA-CYBB. Participates along with GBP1 in trafficking monoubiquinated protein cargo to autolysosomes for generating ubiquitin-derived antimicrobial peptides. Facilitates influenza A virus replication by inhibiting the activation of NF-kappaB and JAK-STAT signaling pathways and the expression of type I, type III interferons and pro-inflammatory cytokines. Confers protection to several pathogens, including the bacterial pathogens Listeria monocytogenes and Mycobacterium bovis BCG as well as the protozoan pathogen Toxoplasma gondii. Required for disruption of the parasitophorous vacuole formed following T.gondii infection and subsequent killing of the parasite. This chain is Guanylate-binding protein 7 (GBP7), found in Homo sapiens (Human).